The primary structure comprises 278 residues: Tryptophan synthase alpha chain (278 aa).

Residues glutamate 50 and aspartate 61 each act as proton acceptor in the active site.

This sequence belongs to the TrpA family. Tetramer of two alpha and two beta chains.

The enzyme catalyses (1S,2R)-1-C-(indol-3-yl)glycerol 3-phosphate + L-serine = D-glyceraldehyde 3-phosphate + L-tryptophan + H2O. The protein operates within amino-acid biosynthesis; L-tryptophan biosynthesis; L-tryptophan from chorismate: step 5/5. Its function is as follows. The alpha subunit is responsible for the aldol cleavage of indoleglycerol phosphate to indole and glyceraldehyde 3-phosphate. The polypeptide is Tryptophan synthase alpha chain (Afipia carboxidovorans (strain ATCC 49405 / DSM 1227 / KCTC 32145 / OM5) (Oligotropha carboxidovorans)).